The following is a 322-amino-acid chain: Elongation factor P--(R)-beta-lysine ligase (322 aa).

72–74 is a binding site for substrate; that stretch reads SPE. Residues 96-98 and asparagine 106 contribute to the ATP site; that span reads RNN. Tyrosine 115 is a binding site for substrate. 241–242 lines the ATP pocket; sequence EL. Glutamate 248 is a substrate binding site. ATP is bound at residue glycine 297.

This sequence belongs to the class-II aminoacyl-tRNA synthetase family. EpmA subfamily. As to quaternary structure, homodimer.

The catalysed reaction is D-beta-lysine + L-lysyl-[protein] + ATP = N(6)-((3R)-3,6-diaminohexanoyl)-L-lysyl-[protein] + AMP + diphosphate + H(+). Functionally, with EpmB is involved in the beta-lysylation step of the post-translational modification of translation elongation factor P (EF-P). Catalyzes the ATP-dependent activation of (R)-beta-lysine produced by EpmB, forming a lysyl-adenylate, from which the beta-lysyl moiety is then transferred to the epsilon-amino group of a conserved specific lysine residue in EF-P. The chain is Elongation factor P--(R)-beta-lysine ligase from Buchnera aphidicola subsp. Baizongia pistaciae (strain Bp).